The primary structure comprises 295 residues: MSSSRPVFRSRWLPYLLVAPQLVITVIFFIWPAGEALWYSLQSVDPFGFSSQFVGLENFVALFHDSYYLDAFWTTIKFSALVTFSGLLVSLFFAALVDYVVRGSRFYQTLMLLPYAVAPAVAAVLWIFLFNPGRGLITHFLGEFGYDWNHAQNSGQAMFLVVFASVWKQISYNFLFFFAALQSIPRSLVEAAAIDGAGPIRRFFRLSLPLIAPVSFFLLVVNLVYAFFDTFPVIDAATAGGPVQATTTLIYKIYREGFTGLDLSASAAQSVVLMFLVIILTVVQFRYVESKVRYQ.

Over 1-11 the chain is Cytoplasmic; sequence MSSSRPVFRSR. Residues 12 to 32 traverse the membrane as a helical segment; it reads WLPYLLVAPQLVITVIFFIWP. The Periplasmic segment spans residues 33-80; that stretch reads AGEALWYSLQSVDPFGFSSQFVGLENFVALFHDSYYLDAFWTTIKFSA. The ABC transmembrane type-1 domain occupies 76 to 284; the sequence is IKFSALVTFS…FLVIILTVVQ (209 aa). The chain crosses the membrane as a helical span at residues 81–101; sequence LVTFSGLLVSLFFAALVDYVV. At 102-109 the chain is on the cytoplasmic side; it reads RGSRFYQT. A helical membrane pass occupies residues 110–130; sequence LMLLPYAVAPAVAAVLWIFLF. Topologically, residues 131-157 are periplasmic; that stretch reads NPGRGLITHFLGEFGYDWNHAQNSGQA. A helical membrane pass occupies residues 158 to 178; sequence MFLVVFASVWKQISYNFLFFF. Topologically, residues 179–207 are cytoplasmic; that stretch reads AALQSIPRSLVEAAAIDGAGPIRRFFRLS. The helical transmembrane segment at 208–228 threads the bilayer; the sequence is LPLIAPVSFFLLVVNLVYAFF. Over 229-262 the chain is Periplasmic; it reads DTFPVIDAATAGGPVQATTTLIYKIYREGFTGLD. The helical transmembrane segment at 263–283 threads the bilayer; sequence LSASAAQSVVLMFLVIILTVV. At 284 to 295 the chain is on the cytoplasmic side; that stretch reads QFRYVESKVRYQ.

It belongs to the binding-protein-dependent transport system permease family. UgpAE subfamily. In terms of assembly, the complex is composed of two ATP-binding proteins (UgpC), two transmembrane proteins (UgpA and UgpE) and a solute-binding protein (UgpB).

Its subcellular location is the cell inner membrane. In terms of biological role, part of the ABC transporter complex UgpBAEC involved in sn-glycerol-3-phosphate (G3P) import. Probably responsible for the translocation of the substrate across the membrane. This is sn-glycerol-3-phosphate transport system permease protein UgpA (ugpA) from Salmonella typhimurium (strain LT2 / SGSC1412 / ATCC 700720).